The chain runs to 641 residues: Peroxisomal targeting signal 1 receptor (641 aa).

A Glycyl cysteine thioester (Cys-Gly) (interchain with G-Cter in ubiquitin) cross-link involves residue cysteine 12. An amphipathic helix 1 (AH1) region spans residues 12 to 34 (CSEPNALGNFVQHFTNERSYHDK). The interval 74-92 (HLMMDRHLNLRDGPREHKE) is amphipathic helix 2 (AH2). The segment at 261-288 (VEAAWDETARRTISDITRPITQINDPKL) is amphipathic helix 4 (AH4). The WxxxF/Y motif signature appears at 331–335 (WTEDY). TPR repeat units follow at residues 359-392 (DSDTLERGMGLFNEGHLSDSIIALESEVKRNPEN), 393-426 (AMAWMYLGIAHAENDQDSQATTCLIKSLQIDPTN), 427-460 (SKARLALAVSHTNDYQKERALDTLEEWLQRTPEY), 503-536 (PEVQTALGLLYNMSYDYDKAVDCFKAALQNSPTD), 538-570 (QLWNKLGATLANSNRSQEALGAYFKALEHKPSY), and 571-604 (VRARSNLGISYLSLNMFQESATTFLGAIAIHPAP).

Belongs to the peroxisomal targeting signal receptor family. Interacts (via WxxxF/Y and LVxEF motifs) with PEX14; promoting translocation through the PEX13-PEX14 docking complex. Interacts with PEX7, promoting peroxisomal import of proteins containing a C-terminal PTS2-type peroxisomal targeting signal. Monoubiquitinated at Cys-12 by PEX2 during PEX5 passage through the retrotranslocation channel. Cys-12 monoubiquitination acts as a recognition signal for the PEX1-PEX6 complex and is required for PEX5 extraction and export from peroxisomes. When PEX5 recycling is compromised, polyubiquitinated by PEX10 during its passage through the retrotranslocation channel, leading to its degradation.

It is found in the cytoplasm. Its subcellular location is the cytosol. The protein localises to the peroxisome matrix. In terms of biological role, receptor that mediates peroxisomal import of proteins containing a C-terminal PTS1-type tripeptide peroxisomal targeting signal (SKL-type). Binds to cargo proteins containing a PTS1 peroxisomal targeting signal in the cytosol, and translocates them into the peroxisome matrix by passing through the PEX13-PEX14 docking complex along with cargo proteins. PEX5 receptor is then retrotranslocated into the cytosol, leading to release of bound cargo in the peroxisome matrix, and reset for a subsequent peroxisome import cycle. Its function is as follows. In addition to promoting peroxisomal translocation of proteins containing a PTS1 peroxisomal targeting signal, mediates peroxisomal import of proteins containing a C-terminal PTS2-type peroxisomal targeting signal via its interaction with PEX7. Interaction with PEX7 only takes place when PEX7 is associated with cargo proteins containing a PTS2 peroxisomal targeting signal. PEX7 along with PTS2-containing cargo proteins are then translocated through the PEX13-PEX14 docking complex together with PEX5. The sequence is that of Peroxisomal targeting signal 1 receptor (pex5) from Dictyostelium discoideum (Social amoeba).